The primary structure comprises 481 residues: Proline--tRNA ligase (481 aa).

Belongs to the class-II aminoacyl-tRNA synthetase family. ProS type 3 subfamily. Homodimer.

It is found in the cytoplasm. The enzyme catalyses tRNA(Pro) + L-proline + ATP = L-prolyl-tRNA(Pro) + AMP + diphosphate. Catalyzes the attachment of proline to tRNA(Pro) in a two-step reaction: proline is first activated by ATP to form Pro-AMP and then transferred to the acceptor end of tRNA(Pro). The protein is Proline--tRNA ligase of Chlorobium chlorochromatii (strain CaD3).